We begin with the raw amino-acid sequence, 337 residues long: Casein kinase I isoform alpha-like (337 aa).

N6-acetyllysine is present on K8. The region spanning 17–285 (YKLVRKIGSG…YLRQLFRILF (269 aa)) is the Protein kinase domain. ATP contacts are provided by residues 23–31 (IGSGSFGDV) and K46. D136 functions as the Proton acceptor in the catalytic mechanism. Residues 309-325 (AASSSGQGQQAQTQTGK) are compositionally biased toward low complexity. The segment at 309–337 (AASSSGQGQQAQTQTGKQTEKNKNNVKDN) is disordered. Positions 326–337 (QTEKNKNNVKDN) are enriched in basic and acidic residues.

It belongs to the protein kinase superfamily. CK1 Ser/Thr protein kinase family. Casein kinase I subfamily. As to quaternary structure, interacts with FAM83A, FAM83B, FAM83C, FAM83D, FAM83E, FAM83F, FAM83G and FAM83H (via DUF1669).

The protein localises to the cytoplasm. The enzyme catalyses L-seryl-[protein] + ATP = O-phospho-L-seryl-[protein] + ADP + H(+). It catalyses the reaction L-threonyl-[protein] + ATP = O-phospho-L-threonyl-[protein] + ADP + H(+). In terms of biological role, casein kinases are operationally defined by their preferential utilization of acidic proteins such as caseins as substrates. It can phosphorylate a large number of proteins. Participates in Wnt signaling. The polypeptide is Casein kinase I isoform alpha-like (CSNK1A1L) (Homo sapiens (Human)).